Consider the following 368-residue polypeptide: GDSL esterase/lipase At4g16230 (368 aa).

An N-terminal signal peptide occupies residues 1-24; the sequence is MSLLVFLCQIIVLSVLFFSEVCLA. Serine 37 functions as the Nucleophile in the catalytic mechanism. Residues asparagine 117 and asparagine 286 are each glycosylated (N-linked (GlcNAc...) asparagine). Residues aspartate 329 and histidine 332 contribute to the active site.

It belongs to the 'GDSL' lipolytic enzyme family.

It is found in the secreted. The polypeptide is GDSL esterase/lipase At4g16230 (Arabidopsis thaliana (Mouse-ear cress)).